We begin with the raw amino-acid sequence, 400 residues long: Enoyl-[acyl-carrier-protein] reductase [NADH] 1 (400 aa).

NAD(+) contacts are provided by residues 48–53, 74–75, 111–112, and 139–140; these read GASSGY, FE, DA, and LA. Y225 lines the substrate pocket. Residue Y235 is the Proton donor of the active site. Residues K244 and 273-275 each bind NAD(+); that span reads VVT.

The protein belongs to the TER reductase family. As to quaternary structure, monomer.

The catalysed reaction is a 2,3-saturated acyl-[ACP] + NAD(+) = a (2E)-enoyl-[ACP] + NADH + H(+). It participates in lipid metabolism; fatty acid biosynthesis. Its function is as follows. Involved in the final reduction of the elongation cycle of fatty acid synthesis (FAS II). Catalyzes the reduction of a carbon-carbon double bond in an enoyl moiety that is covalently linked to an acyl carrier protein (ACP). This is Enoyl-[acyl-carrier-protein] reductase [NADH] 1 from Vibrio vulnificus (strain YJ016).